We begin with the raw amino-acid sequence, 615 residues long: RNA polymerase sigma factor RpoD (615 aa).

Positions 166 to 216 (GYIDPDDGITPPAAEVPPPVDTKTAKADDDSEDEEAEATEDEEEAESGPDP) are disordered. A compositionally biased stretch (acidic residues) spans 194–212 (DDSEDEEAEATEDEEEAES). The sigma-70 factor domain-2 stretch occupies residues 381–451 (MVEANLRLVI…TRSIADQART (71 aa)). The short motif at 405 to 408 (DLIQ) is the Interaction with polymerase core subunit RpoC element. The tract at residues 460–536 (ETINKLNRIS…DSTMQSPIDV (77 aa)) is sigma-70 factor domain-3. Positions 549–602 (VLSGLTAREAKVLRMRFGIDMNTDHTLEEVGKQFDVTRERIRQIEAKALRKLRH) are sigma-70 factor domain-4. The H-T-H motif DNA-binding region spans 575–594 (LEEVGKQFDVTRERIRQIEA).

The protein belongs to the sigma-70 factor family. RpoD/SigA subfamily. Interacts transiently with the RNA polymerase catalytic core.

It localises to the cytoplasm. Functionally, sigma factors are initiation factors that promote the attachment of RNA polymerase to specific initiation sites and are then released. This sigma factor is the primary sigma factor during exponential growth. This Pseudomonas protegens (strain DSM 19095 / LMG 27888 / CFBP 6595 / CHA0) protein is RNA polymerase sigma factor RpoD.